A 245-amino-acid polypeptide reads, in one-letter code: Type II restriction enzyme EcoRV (245 aa).

Mg(2+)-binding residues include E45, D74, and D90. Catalysis depends on residues D74, D90, and K92.

Homodimer. Mg(2+) is required as a cofactor.

It carries out the reaction Endonucleolytic cleavage of DNA to give specific double-stranded fragments with terminal 5'-phosphates.. In terms of biological role, a P subtype restriction enzyme that recognizes the double-stranded sequence 5'-GATATC-3' and cleaves after T-3. This chain is Type II restriction enzyme EcoRV (ecoRVR), found in Escherichia coli.